A 248-amino-acid chain; its full sequence is Ras-like protein family member 11B (248 aa).

A small GTPase-like region spans residues 29–246; it reads AGRRLVKIAV…ALSAKVRTVT (218 aa). Residues 40–47, 87–94, and 152–155 each bind GTP; these read GASGVGKT, DTPGIQVH, and NKAD. The interval 205-226 is disordered; that stretch reads QQPSSTPEKRRTSLIPRPKSPN.

This sequence belongs to the small GTPase superfamily. Ras family. In terms of tissue distribution, widely expressed with highest levels in placenta and primary macrophages.

The enzyme catalyses GTP + H2O = GDP + phosphate + H(+). The sequence is that of Ras-like protein family member 11B from Homo sapiens (Human).